Consider the following 509-residue polypeptide: tRNA-2-methylthio-N(6)-dimethylallyladenosine synthase (509 aa).

The span at 1–15 shows a compositional bias: polar residues; it reads MNEQQRLASQQANSS. Residues 1-25 form a disordered region; sequence MNEQQRLASQQANSSTKKEEKDYSK. Positions 16–25 are enriched in basic and acidic residues; the sequence is TKKEEKDYSK. The region spanning 66 to 184 is the MTTase N-terminal domain; the sequence is RKFYIRTYGC…LPYILKDAMF (119 aa). [4Fe-4S] cluster is bound by residues Cys75, Cys111, Cys145, Cys221, Cys225, and Cys228. The region spanning 207 to 437 is the Radical SAM core domain; that stretch reads RRGDIKAWVN…NTLVNTLAIE (231 aa). The 64-residue stretch at 440–503 folds into the TRAM domain; it reads SRYKGQIVEV…TWSLNGELVE (64 aa).

Belongs to the methylthiotransferase family. MiaB subfamily. In terms of assembly, monomer. It depends on [4Fe-4S] cluster as a cofactor.

Its subcellular location is the cytoplasm. It carries out the reaction N(6)-dimethylallyladenosine(37) in tRNA + (sulfur carrier)-SH + AH2 + 2 S-adenosyl-L-methionine = 2-methylsulfanyl-N(6)-dimethylallyladenosine(37) in tRNA + (sulfur carrier)-H + 5'-deoxyadenosine + L-methionine + A + S-adenosyl-L-homocysteine + 2 H(+). Functionally, catalyzes the methylthiolation of N6-(dimethylallyl)adenosine (i(6)A), leading to the formation of 2-methylthio-N6-(dimethylallyl)adenosine (ms(2)i(6)A) at position 37 in tRNAs that read codons beginning with uridine. The sequence is that of tRNA-2-methylthio-N(6)-dimethylallyladenosine synthase from Bacillus cereus (strain B4264).